The primary structure comprises 298 residues: Serine/threonine-protein kinase 1 (298 aa).

Positions 38 to 276 (FIATRPMFEG…FKSLVSHPWF (239 aa)) constitute a Protein kinase domain. ATP is bound by residues 45 to 53 (FEGGRNNVF) and lysine 65. The active-site Proton acceptor is the aspartate 152.

The protein belongs to the protein kinase superfamily. Ser/Thr protein kinase family.

The protein resides in the virion. Its subcellular location is the host cytoplasm. It catalyses the reaction L-seryl-[protein] + ATP = O-phospho-L-seryl-[protein] + ADP + H(+). The enzyme catalyses L-threonyl-[protein] + ATP = O-phospho-L-threonyl-[protein] + ADP + H(+). Essential for viral replication. It may mediate the virus' progression through DNA replication. The protein is Serine/threonine-protein kinase 1 of Ornithodoros (relapsing fever ticks).